A 154-amino-acid chain; its full sequence is Transcriptional repressor NrdR (154 aa).

The segment at 3-34 is a zinc-finger region; sequence CPFCGNENTRVIDTRAAEDGFAIKRRRECENC. The region spanning 49–139 is the ATP-cone domain; the sequence is LIVVKKDGSK…VYRQFKDVNS (91 aa).

It belongs to the NrdR family. Zn(2+) serves as cofactor.

Functionally, negatively regulates transcription of bacterial ribonucleotide reductase nrd genes and operons by binding to NrdR-boxes. This Carboxydothermus hydrogenoformans (strain ATCC BAA-161 / DSM 6008 / Z-2901) protein is Transcriptional repressor NrdR.